The sequence spans 365 residues: Aspartate-semialdehyde dehydrogenase (365 aa).

NADP(+) contacts are provided by Thr-15, Gly-16, Thr-17, Val-18, Ser-40, Ser-43, Leu-89, and Asp-90. Cys-156 serves as the catalytic Acyl-thioester intermediate. Gly-188 serves as a coordination point for NADP(+). His-255 serves as the catalytic Proton acceptor. An NADP(+)-binding site is contributed by Asn-342.

The protein belongs to the aspartate-semialdehyde dehydrogenase family. Homotetramer; dimer of dimers.

It is found in the cytoplasm. Its subcellular location is the cytosol. The protein resides in the nucleus. The catalysed reaction is L-aspartate 4-semialdehyde + phosphate + NADP(+) = 4-phospho-L-aspartate + NADPH + H(+). The protein operates within amino-acid biosynthesis; L-methionine biosynthesis via de novo pathway; L-homoserine from L-aspartate: step 2/3. It functions in the pathway amino-acid biosynthesis; L-threonine biosynthesis; L-threonine from L-aspartate: step 2/5. Its activity is regulated as follows. Inhibited by the competitive inhibitor 1,4-benzoquinone and derivates such as 2-chloro-3-methoxy-1,4-naphthoquinone, 2,3-dichloro-1,4-naphthoquinone, 2-chloro-1,4-naphthoquinone, 2-bromo-1,4-naphthoquinone and 2,3-dichloro-5,8-dihydroxy-1,4-naphthoquinone. Its function is as follows. Catalyzes the NADPH-dependent formation of L-aspartate 4-semialdehyde (L-ASA) by the reductive dephosphorylation of 4-phospho-L-aspartate. Mediates the second step in the biosynthesis of amino acids that derive from aspartate (the aspartate family of amino acids), including methioinine and threonine, the latter of which is a precursor to isoleucine. This is Aspartate-semialdehyde dehydrogenase from Cryptococcus neoformans var. neoformans serotype D (strain JEC21 / ATCC MYA-565) (Filobasidiella neoformans).